Here is a 335-residue protein sequence, read N- to C-terminus: Nucleoid-associated protein CKO_00588 (335 aa).

The protein belongs to the YejK family.

Its subcellular location is the cytoplasm. The protein resides in the nucleoid. This chain is Nucleoid-associated protein CKO_00588, found in Citrobacter koseri (strain ATCC BAA-895 / CDC 4225-83 / SGSC4696).